The following is a 173-amino-acid chain: dCTP deaminase, dUMP-forming (173 aa).

DCTP-binding positions include 93–98 (RSSIGR), Asp111, 119–121 (TLE), and Gln138. The Proton donor/acceptor role is filled by Glu121.

Belongs to the dCTP deaminase family. Homotrimer.

It carries out the reaction dCTP + 2 H2O = dUMP + NH4(+) + diphosphate. It functions in the pathway pyrimidine metabolism; dUMP biosynthesis; dUMP from dCTP: step 1/1. Its function is as follows. Bifunctional enzyme that catalyzes both the deamination of dCTP to dUTP and the hydrolysis of dUTP to dUMP without releasing the toxic dUTP intermediate. This is dCTP deaminase, dUMP-forming from Leptospira borgpetersenii serovar Hardjo-bovis (strain JB197).